Reading from the N-terminus, the 93-residue chain is Large ribosomal subunit protein uL23cz/uL23cy (93 aa).

It belongs to the universal ribosomal protein uL23 family. In terms of assembly, part of the 50S ribosomal subunit.

The protein localises to the plastid. It is found in the chloroplast. Its function is as follows. Binds to 23S rRNA. This Oenothera elata subsp. hookeri (Hooker's evening primrose) protein is Large ribosomal subunit protein uL23cz/uL23cy (rpl23-A).